The primary structure comprises 653 residues: Putative clathrin assembly protein At2g25430 (653 aa).

Residues 23 to 159 form the ENTH domain; it reads VASNMAPDLE…ELALFERKSG (137 aa). Residues 160 to 171 show a composition bias toward low complexity; that stretch reads VSVNSGGNSSHH. Residues 160–240 are disordered; sequence VSVNSGGNSS…GGGGGGRDEK (81 aa). Positions 172-186 are enriched in basic and acidic residues; the sequence is SNNDDRYGRGRDDFR. Residues 197 to 214 show a composition bias toward gly residues; sequence NGGGGGSDFRGDNNGYGG. Phosphoserine is present on serine 221. Threonine 244 is modified (phosphothreonine). Residues 376 to 389 show a composition bias toward basic and acidic residues; it reads RAKRGKSPERKEIE. The tract at residues 376-431 is disordered; it reads RAKRGKSPERKEIEAPPPVVEEEEPEPDMNEIKALPPPENYTPPPPPEPEPQPEKP. The segment covering 395–404 has biased composition (acidic residues); the sequence is VEEEEPEPDM. A compositionally biased stretch (pro residues) spans 410 to 425; it reads LPPPENYTPPPPPEPE.

It localises to the membrane. Its subcellular location is the clathrin-coated pit. The protein localises to the golgi apparatus. It is found in the cytoplasmic vesicle. The protein resides in the clathrin-coated vesicle. In Arabidopsis thaliana (Mouse-ear cress), this protein is Putative clathrin assembly protein At2g25430.